Reading from the N-terminus, the 439-residue chain is Histidine--tRNA ligase (439 aa).

It belongs to the class-II aminoacyl-tRNA synthetase family. Homodimer.

The protein localises to the cytoplasm. It catalyses the reaction tRNA(His) + L-histidine + ATP = L-histidyl-tRNA(His) + AMP + diphosphate + H(+). The polypeptide is Histidine--tRNA ligase (Leptospira borgpetersenii serovar Hardjo-bovis (strain L550)).